The sequence spans 446 residues: Exodeoxyribonuclease 7 large subunit (446 aa).

The protein belongs to the XseA family. As to quaternary structure, heterooligomer composed of large and small subunits.

Its subcellular location is the cytoplasm. It catalyses the reaction Exonucleolytic cleavage in either 5'- to 3'- or 3'- to 5'-direction to yield nucleoside 5'-phosphates.. Bidirectionally degrades single-stranded DNA into large acid-insoluble oligonucleotides, which are then degraded further into small acid-soluble oligonucleotides. This chain is Exodeoxyribonuclease 7 large subunit, found in Streptococcus pyogenes serotype M49 (strain NZ131).